The sequence spans 276 residues: Diaminopimelate epimerase (276 aa).

Positions 13, 46, and 66 each coordinate substrate. The active-site Proton donor is the Cys75. Residues 76–77 (GN), Asn159, Asn192, and 210–211 (ER) contribute to the substrate site. Cys219 acts as the Proton acceptor in catalysis. 220–221 (GT) lines the substrate pocket.

Belongs to the diaminopimelate epimerase family. As to quaternary structure, homodimer.

It is found in the cytoplasm. It carries out the reaction (2S,6S)-2,6-diaminopimelate = meso-2,6-diaminopimelate. The protein operates within amino-acid biosynthesis; L-lysine biosynthesis via DAP pathway; DL-2,6-diaminopimelate from LL-2,6-diaminopimelate: step 1/1. In terms of biological role, catalyzes the stereoinversion of LL-2,6-diaminopimelate (L,L-DAP) to meso-diaminopimelate (meso-DAP), a precursor of L-lysine and an essential component of the bacterial peptidoglycan. This is Diaminopimelate epimerase from Pseudomonas aeruginosa (strain UCBPP-PA14).